The primary structure comprises 296 residues: Thioredoxin-related transmembrane protein 2 (296 aa).

Positions 1 to 48 are cleaved as a signal peptide; it reads MAVLAPLIALVYSVPRLSRWLAQPYYLLSALLSAAFLLVRKLPPLCHG. Residues 49 to 102 are Extracellular-facing; it reads LPTQREDGNPCDFDWREVEILMFLSAIVMMKNRRSITVEQHIGNIFMFSKVANA. A helical transmembrane segment spans residues 103–125; that stretch reads ILFFRLDIRMGLLYITLCIVFLM. The Thioredoxin domain occupies 114–270; that stretch reads LLYITLCIVF…YQRAKKPSKA (157 aa). Residues 126 to 296 are Cytoplasmic-facing; the sequence is TCEPPLYMGP…VSDGENKKDK (171 aa). Phosphoserine occurs at positions 211, 243, and 288. The disordered stretch occupies residues 266-296; that stretch reads KPSKAGDSIPEEQPVASAPTTVSDGENKKDK. The short motif at 293 to 296 is the Di-lysine motif element; that stretch reads KKDK.

Monomer. Homodimer; disulfide-linked. Occurs in both reduced and oxidized monomeric form. Oxidative conditions increase homodimerization. Interacts with CANX. Interacts with ATP2A2.

The protein localises to the endoplasmic reticulum membrane. It localises to the mitochondrion membrane. Functionally, endoplasmic reticulum and mitochondria-associated protein that probably functions as a regulator of cellular redox state and thereby regulates protein post-translational modification, protein folding and mitochondrial activity. Indirectly regulates neuronal proliferation, migration, and organization in the developing brain. This Pongo abelii (Sumatran orangutan) protein is Thioredoxin-related transmembrane protein 2 (TMX2).